The sequence spans 122 residues: Conotoxin flf14.2 (122 aa).

The first 22 residues, 1 to 22, serve as a signal peptide directing secretion; it reads MGFRVLVLIVMVTTSALPFTFS. Positions 23-96 are excised as a propeptide; that stretch reads EESGRSPFRP…AESPVGQKRW (74 aa). The interval 53–91 is disordered; sequence RADGQPSDMRQPEMRRPEMRRPEVRRPEVRQPEFAESPV. Residues 62-85 show a composition bias toward basic and acidic residues; it reads RQPEMRRPEMRRPEVRRPEVRQPE. 2 cysteine pairs are disulfide-bonded: cysteine 101–cysteine 121 and cysteine 105–cysteine 117.

This sequence belongs to the conotoxin R superfamily. In terms of tissue distribution, expressed by the venom duct.

It is found in the secreted. In Conus anabathrum floridanus (Florida cone), this protein is Conotoxin flf14.2.